Reading from the N-terminus, the 582-residue chain is Inositol transporter 4 (582 aa).

The next 12 helical transmembrane spans lie at 35–55 (GIGGLLFGYDTGVISGALLFI), 70–90 (STIVSMAVAGAIVGAAVGGWI), 105–125 (VLFLIGAIVMAFAPAPWVIIV), 128–148 (IFVGFGVGMASMTSPLYISEA), 162–182 (GLLITGGQFFSYLINLAFVHT), 188–208 (WMLGVAGVPAIVQFVLMLSLP), 290–310 (FVGINTVMYYSPSIVQFAGYA), 317–337 (ALSLITSGLNALGSIVSMMFV), 345–365 (LMIISMFGIIACLIILATVFS), 456–476 (FGFLAIVFLGLYIVVYAPGMG), 494–514 (LGGGIAAVSNWVSNLIVSESF), and 525–545 (GTFLLFAGFSTIGLFFIWLLV).

This sequence belongs to the major facilitator superfamily. Sugar transporter (TC 2.A.1.1) family. Highly expressed in pollen and phloem companion cells.

The protein localises to the cell membrane. Plasma membrane inositol-proton symporter. Mediates high-affinity myoinositol-proton symport across the plasma membrane. Active with myoinositol, scylloinositol and D-chiroinositol. Low activity with mucoinositol and alloinositol. In Arabidopsis thaliana (Mouse-ear cress), this protein is Inositol transporter 4 (INT4).